The chain runs to 649 residues: MTKETIRVVICGDDGVGKTSLIVSLVKGQFIPNLQAVLPPVTIPRDFSSSPYSPKNTVLIDTDNSDPLAIQRELKNADVIWLVYSDKDSYERISLYWMITFRSLGLNIPVILCKNKCDQYTTNSPLEDFLDTKIEDEEFIPILMAFKEVDTCVKASAKTHFDVNQSFYLCQRSISYPISPLFDAKVGDLKPSAVAALSRIFFLSDEDQDGFLNDNEIMDLQRKCFGKSIDLNELNFIKHTLSDLTSSEEYPSEILYCQGKGLTKQGFIALNKIYTEKGRHETTWGILRAFNYTDSLSIDDAVLFPKVNVPEQASVELSSKGYRFLVDIFIKFDSDNDGALNDTELHTLFRSTPGLPNLWLETNFPASTVVNAKGFVTLQGWLAQWTMTTYLDYKITTAYLVYLGFQEDAKLAVQITKSRRMRRRQGRLYRSYVTDRKVFNCFVVGKRNSGKSSLLESFLGRLFSEAYSPTIRPRVAVNNVEVTGDKQYYLILQEFGEQEEAILQNPSRLAECDVLCLTYDSSDPESFSYLLELLTNNEIMKDIPVVFVALKADLDKQQQRCKFQPDEFTDTLYLDHPLHVSSTWSSSLNQLFKKIIQASLEPGKFTPGFPPDIKPTNIDYSSAVILGSSIGFLALFSYTMIKLLKPTQQ.

Residues methionine 1 to alanine 623 lie on the Cytoplasmic side of the membrane. In terms of domain architecture, Miro 1 spans lysine 3–tyrosine 176. GTP contacts are provided by residues glycine 12–threonine 19, aspartate 61–aspartate 63, and asparagine 115–aspartate 118. EF-hand domains lie at serine 192–lysine 227 and lysine 320–leucine 355. The Ca(2+) site is built by aspartate 205, aspartate 207, aspartate 209, glutamate 216, aspartate 333, aspartate 335, aspartate 337, and glutamate 344. One can recognise a Miro 2 domain in the interval arginine 436 to glutamate 601. Residues glycine 445–serine 452, glutamate 481–aspartate 485, and leucine 550–aspartate 553 contribute to the GTP site. The helical; Anchor for type IV membrane protein transmembrane segment at valine 624–leucine 644 threads the bilayer. Residues lysine 645 to glutamine 649 lie on the Mitochondrial intermembrane side of the membrane.

It belongs to the mitochondrial Rho GTPase family.

Its subcellular location is the mitochondrion outer membrane. Its function is as follows. Mitochondrial GTPase involved in mitochondrial trafficking. Probably involved in control of anterograde transport of mitochondria and their subcellular distribution. The sequence is that of Mitochondrial Rho GTPase 1 (GEM1) from Candida glabrata (strain ATCC 2001 / BCRC 20586 / JCM 3761 / NBRC 0622 / NRRL Y-65 / CBS 138) (Yeast).